The chain runs to 215 residues: Pyrrolidone-carboxylate peptidase (215 aa).

Active-site residues include E80, C143, and H167.

This sequence belongs to the peptidase C15 family. In terms of assembly, homotetramer.

It localises to the cytoplasm. It catalyses the reaction Release of an N-terminal pyroglutamyl group from a polypeptide, the second amino acid generally not being Pro.. In terms of biological role, removes 5-oxoproline from various penultimate amino acid residues except L-proline. The chain is Pyrrolidone-carboxylate peptidase from Pectobacterium atrosepticum (strain SCRI 1043 / ATCC BAA-672) (Erwinia carotovora subsp. atroseptica).